Here is a 1430-residue protein sequence, read N- to C-terminus: 3'-5' RNA helicase YTHDC2 (1430 aa).

Positions 1–37 (MSRPSSVSPRQPAPGGGGGGGPSPCGPGGGGRAKGLK) are disordered. Residues 14 to 33 (PGGGGGGGPSPCGPGGGGRA) show a composition bias toward gly residues. Positions 38 to 106 (DIRIDEEVKI…NRYLTVKKKD (69 aa)) constitute an R3H domain. In terms of domain architecture, Helicase ATP-binding spans 203–369 (VKIIKENKVV…FGSCPVIYIQ (167 aa)). 216–223 (GETGSGKT) is an ATP binding site. The DEAH box signature appears at 316-319 (DEVH). ANK repeat units follow at residues 506-538 (TSATALMVAAGRGFASQVEQLISMGANVHSKAS) and 539-571 (NGWMALDWAKHFGQTEIVDLLESYSATLEFGNL). The 173-residue stretch at 612 to 784 (LLYNICHSCD…ELCLHTKLLA (173 aa)) folds into the Helicase C-terminal domain. Phosphoserine is present on residues serine 1089, serine 1090, and serine 1092. A compositionally biased stretch (polar residues) spans 1164–1174 (EQSAGLQQPSG). The segment at 1164–1288 (EQSAGLQQPS…SPSPRPNMPV (125 aa)) is disordered. Over residues 1191 to 1200 (SSWRSNNSRK) the composition is skewed to low complexity. Serine 1202 is subject to Phosphoserine. Residues 1231 to 1249 (KYKDRGILHPKRGTEDRSD) are compositionally biased toward basic and acidic residues. Over residues 1250–1264 (QSSLKSTDSSSYPSP) the composition is skewed to low complexity. 3 positions are modified to phosphoserine: serine 1263, serine 1267, and serine 1281. The 131-residue stretch at 1288 to 1418 (VRYFIMKSSN…LVGEQLLQLW (131 aa)) folds into the YTH domain. RNA is bound by residues 1294–1296 (KSS), tryptophan 1310, and tryptophan 1360.

The protein belongs to the DEAD box helicase family. DEAH subfamily. In terms of assembly, interacts with MEIOC; binds transcripts that regulate the mitotic cell cycle inhibiting progression into metaphase, thereby allowing meiotic prophase to proceed normally. Interacts (via ANK repeats) with XRN1. Interacts with ZCCHC4. Associates with the small ribosomal subunit. Interacts with RBM46. Expressed in testis. Not detected in spermatogonia next to the tubule wall but is strongly expressed in spermatocytes, suggesting that it is up-regulated in germ cells upon entry into meiosis.

It localises to the cytoplasm. Its subcellular location is the perinuclear region. It carries out the reaction ATP + H2O = ADP + phosphate + H(+). Functionally, 3'-5' RNA helicase that plays a key role in the male and female germline by promoting transition from mitotic to meiotic divisions in stem cells. Specifically recognizes and binds N6-methyladenosine (m6A)-containing RNAs, a modification present at internal sites of mRNAs and some non-coding RNAs that plays a role in the efficiency of RNA processing and stability. Essential for ensuring a successful progression of the meiotic program in the germline by regulating the level of m6A-containing RNAs. Acts by binding and promoting degradation of m6A-containing mRNAs: the 3'-5' RNA helicase activity is required for this process and RNA degradation may be mediated by XRN1 exoribonuclease. Required for both spermatogenesis and oogenesis. The sequence is that of 3'-5' RNA helicase YTHDC2 from Homo sapiens (Human).